Consider the following 421-residue polypeptide: Histidine--tRNA ligase (421 aa).

This sequence belongs to the class-II aminoacyl-tRNA synthetase family. As to quaternary structure, homodimer.

It localises to the cytoplasm. It carries out the reaction tRNA(His) + L-histidine + ATP = L-histidyl-tRNA(His) + AMP + diphosphate + H(+). In Solidesulfovibrio magneticus (strain ATCC 700980 / DSM 13731 / RS-1) (Desulfovibrio magneticus), this protein is Histidine--tRNA ligase.